A 245-amino-acid polypeptide reads, in one-letter code: MYPVDLHMHTVASTHAYSTLSDYIAQAKQKGIKLFAITDHGPDMEDAPHHWHFINMRIWPRVVDGVGILRGIEANIKNVDGEIDCSGKMFDSLDLIIAGFHEPVFAPHDKATNTQAMISTIASGNVHIISHPGNPKYEIDVKAVAEAAAKHQVALEINNSSFLHSRKGSEDNCRAVAAAVRDAGGWVALGSDSHTAFTMGEFEECLKILDAVDFPLERILNVSPRRLLNFLESRGMAPIAEFADL.

Histidine 7, histidine 9, histidine 15, histidine 40, glutamate 73, histidine 101, histidine 131, aspartate 192, and histidine 194 together coordinate Zn(2+).

It belongs to the PHP family. Homotrimer. The cofactor is Zn(2+).

The chain is Probable phosphatase YcdX from Shigella flexneri serotype 5b (strain 8401).